Consider the following 270-residue polypeptide: Putative protein-disulfide oxidoreductase RT0103 (270 aa).

Positions Met-1–Ala-17 are cleaved as a signal peptide. Residues Ser-71–Glu-264 form the Thioredoxin domain. Cys-117 and Cys-120 form a disulfide bridge.

This sequence belongs to the thioredoxin family. DsbA subfamily.

It localises to the periplasm. Its function is as follows. May be required for disulfide bond formation in some proteins. The protein is Putative protein-disulfide oxidoreductase RT0103 of Rickettsia typhi (strain ATCC VR-144 / Wilmington).